The chain runs to 72 residues: Phaiodotoxin-2 (72 aa).

The region spanning 1-72 (KFIRHKDESF…CFGALESKCA (72 aa)) is the LCN-type CS-alpha/beta domain. 4 disulfide bridges follow: cysteine 13-cysteine 38, cysteine 23-cysteine 50, cysteine 27-cysteine 52, and cysteine 63-cysteine 71.

It belongs to the long (4 C-C) scorpion toxin superfamily. Sodium channel inhibitor family. As to expression, expressed by the venom gland.

Its subcellular location is the secreted. In terms of biological role, sodium channel (Nav) specific neurotoxin. This Anuroctonus phaiodactylus (Mafia scorpion) protein is Phaiodotoxin-2.